Consider the following 256-residue polypeptide: Probable transcriptional regulatory protein cce_0894 (256 aa).

Belongs to the TACO1 family.

The protein localises to the cytoplasm. This chain is Probable transcriptional regulatory protein cce_0894, found in Crocosphaera subtropica (strain ATCC 51142 / BH68) (Cyanothece sp. (strain ATCC 51142)).